Consider the following 90-residue polypeptide: Acylphosphatase (90 aa).

Positions 5-90 (CVKASVKGIV…WRHIDGFEIK (86 aa)) constitute an Acylphosphatase-like domain. Catalysis depends on residues Arg20 and Asn38.

Belongs to the acylphosphatase family.

The catalysed reaction is an acyl phosphate + H2O = a carboxylate + phosphate + H(+). This Photobacterium profundum (strain SS9) protein is Acylphosphatase (acyP).